Reading from the N-terminus, the 429-residue chain is Glutamyl-tRNA reductase (429 aa).

Residues 50–53 (TCNR), S116, 121–123 (EPQ), and Q127 contribute to the substrate site. The active-site Nucleophile is the C51. 196–201 (GAGEMA) contacts NADP(+).

The protein belongs to the glutamyl-tRNA reductase family. In terms of assembly, homodimer.

The enzyme catalyses (S)-4-amino-5-oxopentanoate + tRNA(Glu) + NADP(+) = L-glutamyl-tRNA(Glu) + NADPH + H(+). It participates in porphyrin-containing compound metabolism; protoporphyrin-IX biosynthesis; 5-aminolevulinate from L-glutamyl-tRNA(Glu): step 1/2. Catalyzes the NADPH-dependent reduction of glutamyl-tRNA(Glu) to glutamate 1-semialdehyde (GSA). The chain is Glutamyl-tRNA reductase from Thermodesulfovibrio yellowstonii (strain ATCC 51303 / DSM 11347 / YP87).